Reading from the N-terminus, the 569-residue chain is MSQNVDEKVVHDDASVIRSVDRSESDSYPDSVSPEGAEPSEEEMKTLRRVARRVPLACWLVAIVELAERFSYYGLSTPFQNYMQYTKTDHPRGVLGLNQSGATALSYFWQFWCYVTPIFGAWVADTYLGKYNTISIFCVLYIIGILILFVTSLPSMSQNTSLGGFITAVIVIGIGTGGVKSNVSPLIADQVPKEKPSIKVLKSGERVIEDPNLTIQNVFMFFYLMINIGSLSVIATTELESRVDFWAAYLLPLCFFVIALLALFLGKKVYHKVPVGDKVIAKSFKCSFLALTKLNYDAARPSLNPDKEFPWTDKFVDEVQRALYACKVFLIYPIYWLVYGQMTNNFVSSAGQMELHGLPNDILQAIDSITIIIFIPICESIVYPFIRRFTPFRAITKIFWGFMFGAAAMVYAAVLQHFIYKAGPCYDSPNDCPGFKNIPNHIHVALQTPAYFLIAISEILASITGLEYAYTKAPVSMKSFIMSIFLVQNAFGSALGIALSPVSKDPKMVWTYTGLAVSCFIAGWVFWFLFKHYNDREDKWNDLDYEQDDGYNGELEPVVSLTRSFKDMS.

Positions 1–25 (MSQNVDEKVVHDDASVIRSVDRSES) are enriched in basic and acidic residues. The tract at residues 1–43 (MSQNVDEKVVHDDASVIRSVDRSESDSYPDSVSPEGAEPSEEE) is disordered. Residues 54-74 (VPLACWLVAIVELAERFSYYG) traverse the membrane as a helical segment. N-linked (GlcNAc...) asparagine glycosylation is present at Asn-98. The next 3 membrane-spanning stretches (helical) occupy residues 104–124 (ALSY…AWVA), 134–154 (ISIF…TSLP), and 159–179 (NTSL…TGGV). N-linked (GlcNAc...) asparagine glycosylation is present at Asn-212. 8 helical membrane passes run 215-235 (IQNV…SVIA), 245-265 (FWAA…ALFL), 322-342 (ALYA…YGQM), 366-386 (IDSI…YPFI), 398-418 (IFWG…LQHF), 444-464 (VALQ…ASIT), 479-499 (SFIM…GIAL), and 510-530 (WTYT…WFLF).

This sequence belongs to the major facilitator superfamily. Proton-dependent oligopeptide transporter (POT/PTR) (TC 2.A.17) family.

Its subcellular location is the cell membrane. The enzyme catalyses a dipeptide(out) + H(+)(out) = a dipeptide(in) + H(+)(in). It catalyses the reaction an L-amino acid tripeptide(out) + H(+)(out) = an L-amino acid tripeptide(in) + H(+)(in). Functionally, peptide transporter that exploits the inwardly directed proton motive force to facilitate the cellular uptake of di/tripeptides. Shows strong uptake specificity towards the dipeptides Tyr-Phe and Leu-Gly and the tripeptide Phe-Gly-Gly, when compared to PTR_A and PTR_B. Also able to import peptide-based antifungals such as the peptide-nucleoside drug nikkomycin Z as well as the glucosamine-6-phosphate synthase inhibitor, L-norvalyl-N3-(4-methoxyfumaroyl)-L-2,3-diaminopropionoic acid (Nva-FMDP). This Candidozyma auris (Yeast) protein is Peptide transporter PTR_C.